Consider the following 199-residue polypeptide: Holliday junction branch migration complex subunit RuvA (199 aa).

Residues 1-63 form a domain I region; it reads MIGCLIGEVF…EDAQQLYGFS (63 aa). Residues 64–142 form a domain II region; the sequence is DAQEKTIFRT…TLAQGTSSAA (79 aa). A flexible linker region spans residues 143 to 150; sequence ALPQIQFV. A domain III region spans residues 150 to 199; that stretch reads VSNSPVAEAEAALQSLGYKPLEAQKAVAAVKADYTESADIIRAALKSMMK.

It belongs to the RuvA family. In terms of assembly, homotetramer. Forms an RuvA(8)-RuvB(12)-Holliday junction (HJ) complex. HJ DNA is sandwiched between 2 RuvA tetramers; dsDNA enters through RuvA and exits via RuvB. An RuvB hexamer assembles on each DNA strand where it exits the tetramer. Each RuvB hexamer is contacted by two RuvA subunits (via domain III) on 2 adjacent RuvB subunits; this complex drives branch migration. In the full resolvosome a probable DNA-RuvA(4)-RuvB(12)-RuvC(2) complex forms which resolves the HJ.

Its subcellular location is the cytoplasm. The RuvA-RuvB-RuvC complex processes Holliday junction (HJ) DNA during genetic recombination and DNA repair, while the RuvA-RuvB complex plays an important role in the rescue of blocked DNA replication forks via replication fork reversal (RFR). RuvA specifically binds to HJ cruciform DNA, conferring on it an open structure. The RuvB hexamer acts as an ATP-dependent pump, pulling dsDNA into and through the RuvAB complex. HJ branch migration allows RuvC to scan DNA until it finds its consensus sequence, where it cleaves and resolves the cruciform DNA. The chain is Holliday junction branch migration complex subunit RuvA from Acinetobacter baumannii (strain AB307-0294).